Reading from the N-terminus, the 580-residue chain is uncharacterized protein (580 aa).

5 disordered regions span residues 161-241 (SFSP…SVND), 256-281 (LGSL…SFSD), 325-345 (NVSH…QLLK), 472-495 (PRDT…DNSD), and 544-564 (SAVL…KEVR). The segment covering 192–203 (SNSNSSDTSTDD) has biased composition (low complexity). Composition is skewed to polar residues over residues 223–241 (THSS…SVND) and 256–269 (LGSL…TAQK). A compositionally biased stretch (basic and acidic residues) spans 326–341 (VSHEEKSHSVQDDKSK). A compositionally biased stretch (polar residues) spans 481 to 495 (PNLSQSGNINSDNSD).

This is an uncharacterized protein from Schizosaccharomyces pombe (strain 972 / ATCC 24843) (Fission yeast).